Here is a 300-residue protein sequence, read N- to C-terminus: Ribosomal protein bS6--L-glutamate ligase (300 aa).

Positions 104-287 (MQLLARQGID…IAGKMIRWIE (184 aa)) constitute an ATP-grasp domain. ATP-binding positions include K141, 178–179 (EY), D187, and 211–213 (RSN). The Mg(2+) site is built by D248, E260, and N262. The Mn(2+) site is built by D248, E260, and N262.

Belongs to the RimK family. It depends on Mg(2+) as a cofactor. The cofactor is Mn(2+).

Functionally, an L-glutamate ligase that catalyzes the ATP-dependent post-translational addition of glutamate residues to the C-terminus of ribosomal protein bS6 (RpsF). Is also able to catalyze the synthesis of poly-alpha-glutamate in vitro, via ATP hydrolysis from unprotected glutamate as substrate. The number of glutamate residues added to either RpsF or to poly-alpha-glutamate changes with pH. The sequence is that of Ribosomal protein bS6--L-glutamate ligase from Shigella flexneri serotype 5b (strain 8401).